The sequence spans 376 residues: 5-amino-6-(D-ribitylamino)uracil--L-tyrosine 4-hydroxyphenyl transferase 1 (376 aa).

A Radical SAM core domain is found at 50 to 284 (VTYVVNRNIN…AISRILLHGH (235 aa)). 3 residues coordinate [4Fe-4S] cluster: Cys64, Cys68, and Cys71.

This sequence belongs to the radical SAM superfamily. CofH family. As to quaternary structure, consists of two subunits, CofG and CofH. Requires [4Fe-4S] cluster as cofactor.

The enzyme catalyses 5-amino-6-(D-ribitylamino)uracil + L-tyrosine + S-adenosyl-L-methionine = 5-amino-5-(4-hydroxybenzyl)-6-(D-ribitylimino)-5,6-dihydrouracil + 2-iminoacetate + 5'-deoxyadenosine + L-methionine + H(+). It functions in the pathway cofactor biosynthesis; coenzyme F0 biosynthesis. In terms of biological role, catalyzes the radical-mediated synthesis of 5-amino-5-(4-hydroxybenzyl)-6-(D-ribitylimino)-5,6-dihydrouracil from 5-amino-6-(D-ribitylamino)uracil and L-tyrosine. This Methanosarcina barkeri (strain Fusaro / DSM 804) protein is 5-amino-6-(D-ribitylamino)uracil--L-tyrosine 4-hydroxyphenyl transferase 1.